Reading from the N-terminus, the 291-residue chain is Lipoyl synthase, organellar chromatophore (291 aa).

The [4Fe-4S] cluster site is built by Cys33, Cys38, Cys44, Cys59, Cys63, Cys66, and Ser274. A Radical SAM core domain is found at 45–263 (FAGGTATFLI…AIGELEMNFL (219 aa)).

The protein belongs to the radical SAM superfamily. Lipoyl synthase family. Requires [4Fe-4S] cluster as cofactor.

It is found in the plastid. The protein localises to the organellar chromatophore. It catalyses the reaction [[Fe-S] cluster scaffold protein carrying a second [4Fe-4S](2+) cluster] + N(6)-octanoyl-L-lysyl-[protein] + 2 oxidized [2Fe-2S]-[ferredoxin] + 2 S-adenosyl-L-methionine + 4 H(+) = [[Fe-S] cluster scaffold protein] + N(6)-[(R)-dihydrolipoyl]-L-lysyl-[protein] + 4 Fe(3+) + 2 hydrogen sulfide + 2 5'-deoxyadenosine + 2 L-methionine + 2 reduced [2Fe-2S]-[ferredoxin]. Its pathway is protein modification; protein lipoylation via endogenous pathway; protein N(6)-(lipoyl)lysine from octanoyl-[acyl-carrier-protein]: step 2/2. Functionally, catalyzes the radical-mediated insertion of two sulfur atoms into the C-6 and C-8 positions of the octanoyl moiety bound to the lipoyl domains of lipoate-dependent enzymes, thereby converting the octanoylated domains into lipoylated derivatives. The polypeptide is Lipoyl synthase, organellar chromatophore (Paulinella chromatophora).